We begin with the raw amino-acid sequence, 315 residues long: 7,8-didemethyl-8-hydroxy-5-deazariboflavin synthase (315 aa).

The Radical SAM core domain maps to 6-237; sequence ITYSPAFTLV…EDITIQIPAN (232 aa). 3 residues coordinate [4Fe-4S] cluster: Cys-20, Cys-24, and Cys-27.

Belongs to the radical SAM superfamily. CofG family. As to quaternary structure, consists of two subunits, CofG and CofH. It depends on [4Fe-4S] cluster as a cofactor.

The catalysed reaction is 5-amino-5-(4-hydroxybenzyl)-6-(D-ribitylimino)-5,6-dihydrouracil + S-adenosyl-L-methionine = 7,8-didemethyl-8-hydroxy-5-deazariboflavin + 5'-deoxyadenosine + L-methionine + NH4(+) + H(+). It participates in cofactor biosynthesis; coenzyme F0 biosynthesis. Functionally, catalyzes the radical-mediated synthesis of 7,8-didemethyl-8-hydroxy-5-deazariboflavin from 5-amino-5-(4-hydroxybenzyl)-6-(D-ribitylimino)-5,6-dihydrouracil. In Thermosynechococcus vestitus (strain NIES-2133 / IAM M-273 / BP-1), this protein is 7,8-didemethyl-8-hydroxy-5-deazariboflavin synthase.